The sequence spans 552 residues: HTH-type transcriptional regulator SgrR (552 aa).

A solute-binding region spans residues 163-493 (ELKPDLAHHW…DDLDTDAQQW (331 aa)).

Activates the small RNA gene sgrS under glucose-phosphate stress conditions as well as yfdZ. Represses its own transcription under both stress and non-stress conditions. Might act as a sensor of the intracellular accumulation of phosphoglucose by binding these molecules in its C-terminal solute-binding domain. The polypeptide is HTH-type transcriptional regulator SgrR (Pectobacterium atrosepticum (strain SCRI 1043 / ATCC BAA-672) (Erwinia carotovora subsp. atroseptica)).